A 256-amino-acid polypeptide reads, in one-letter code: MKIITCYKCVPDEQDIAVNNADGSLDFSKADAKISQYDLNAIEAACQLKQQAAEAQVTALSVGGKALTNAKGRKDVLSRGPDELIVVIDDQFEQALPQQTASALAAAAQKAGFDLILCGDGSSDLYAQQVGLLVGEILNIPAVNGVSKIISLTADTLTVERELEDETETLSIPLPAVVAVSTDINSPQIPSMKAILGAAKKPVQVWSAADIGFNAVDAWSEQQVAAPKQRERQRIVIEGDGEEQIAAFAENLRKVI.

Belongs to the ETF beta-subunit/FixA family. In terms of assembly, heterodimer of FixA and FixB.

The protein operates within amine and polyamine metabolism; carnitine metabolism. Functionally, required for anaerobic carnitine reduction. May bring reductant to CaiA. The chain is Protein FixA from Shigella flexneri serotype 5b (strain 8401).